Consider the following 382-residue polypeptide: Mannosyl phosphorylinositol ceramide synthase SUR1 (382 aa).

Topologically, residues 1–6 (MRKELK) are cytoplasmic. Residues 7–27 (YLICFNILLLLSIIYYTFDLL) form a helical membrane-spanning segment. At 28–269 (TLCIDDTVKD…KALENHILSC (242 aa)) the chain is on the extracellular side. A helical membrane pass occupies residues 270–290 (VVTGFIFGFFILYGEFTFYCW). The Cytoplasmic portion of the chain corresponds to 291 to 382 (LCSKNFSNLT…SKYSLGNNSS (92 aa)). A Phosphoserine modification is found at Ser-349.

This sequence belongs to the glycosyltransferase 32 family. In terms of assembly, heterodimer of SUR1 and CSG2.

It localises to the membrane. It catalyses the reaction a 1D-myo-inositol-1-phospho-N-[(R)-2-hydroxy-very-long-chain fatty acyl]-(R)-4-hydroxysphingoid base + GDP-alpha-D-mannose = an alpha-D-mannosyl-(1&lt;-&gt;6)-1D-myo-inositol-1-phospho-N-[(R)-2-hydroxy-very-long-chain fatty acyl]-(R)-4-hydroxysphingoid base + GDP + H(+). Involved in the synthesis of mannosyl phosphorylinositol ceramide. Catalyzes the addition of mannosyl to phosphorylinositol ceramide. Suppressor of RVS161 mutation. This Saccharomyces cerevisiae (strain ATCC 204508 / S288c) (Baker's yeast) protein is Mannosyl phosphorylinositol ceramide synthase SUR1.